Consider the following 242-residue polypeptide: 1-(5-phosphoribosyl)-5-[(5-phosphoribosylamino)methylideneamino] imidazole-4-carboxamide isomerase (242 aa).

D8 (proton acceptor) is an active-site residue. Residue D129 is the Proton donor of the active site.

Belongs to the HisA/HisF family.

Its subcellular location is the cytoplasm. The enzyme catalyses 1-(5-phospho-beta-D-ribosyl)-5-[(5-phospho-beta-D-ribosylamino)methylideneamino]imidazole-4-carboxamide = 5-[(5-phospho-1-deoxy-D-ribulos-1-ylimino)methylamino]-1-(5-phospho-beta-D-ribosyl)imidazole-4-carboxamide. It participates in amino-acid biosynthesis; L-histidine biosynthesis; L-histidine from 5-phospho-alpha-D-ribose 1-diphosphate: step 4/9. This chain is 1-(5-phosphoribosyl)-5-[(5-phosphoribosylamino)methylideneamino] imidazole-4-carboxamide isomerase, found in Beijerinckia indica subsp. indica (strain ATCC 9039 / DSM 1715 / NCIMB 8712).